A 175-amino-acid chain; its full sequence is Polyadenylate-binding protein-interacting protein 6 (175 aa).

The PAM2-like signature appears at 7 to 17 (TLNPYAAAYVP). In terms of domain architecture, CUE spans 83 to 126 (EMDMDIEYLLATYPGLSQESINDVYLANTCDLDATIEMLNQLEI). The tract at residues 145 to 175 (PEIITESSKQKNDGSSASSSSGIRNANVSSS) is disordered. Residues 166-175 (GIRNANVSSS) are compositionally biased toward polar residues.

This is Polyadenylate-binding protein-interacting protein 6 (CID6) from Arabidopsis thaliana (Mouse-ear cress).